Here is a 282-residue protein sequence, read N- to C-terminus: E3 ubiquitin-protein ligase Siah1 (282 aa).

Residues 1–28 (MSRQTATALPTGTSKCPPSQRVPTLSGT) form a disordered region. The RING-type zinc finger occupies 41 to 76 (CPVCFDYVLPPILQCQSGHLVCSNCRPKLTCCPTCR). The SBD stretch occupies residues 90-282 (VANSVLFPCK…LGINVTISMC (193 aa)). The SIAH-type zinc finger occupies 93-153 (SVLFPCKYAS…VMPHLLHQHK (61 aa)). Zn(2+) is bound by residues Cys-98, Cys-105, His-117, Cys-121, Cys-128, Cys-135, His-147, and His-152.

It belongs to the SINA (Seven in absentia) family. As to quaternary structure, homodimer.

It carries out the reaction S-ubiquitinyl-[E2 ubiquitin-conjugating enzyme]-L-cysteine + [acceptor protein]-L-lysine = [E2 ubiquitin-conjugating enzyme]-L-cysteine + N(6)-ubiquitinyl-[acceptor protein]-L-lysine.. The protein operates within protein modification; protein ubiquitination. E3 ubiquitin-protein ligase that mediates ubiquitination and subsequent proteasomal degradation of target proteins. E3 ubiquitin ligases accept ubiquitin from an E2 ubiquitin-conjugating enzyme in the form of a thioester and then directly transfers the ubiquitin to targeted substrates. It probably triggers the ubiquitin-mediated degradation of different substrates. This chain is E3 ubiquitin-protein ligase Siah1 (siah1), found in Danio rerio (Zebrafish).